The primary structure comprises 392 residues: Formate-dependent phosphoribosylglycinamide formyltransferase (392 aa).

N(1)-(5-phospho-beta-D-ribosyl)glycinamide-binding positions include E20–L21 and E80. ATP is bound by residues R112, K153, S158–Q163, E193–I196, and E201. Residues R117–L306 enclose the ATP-grasp domain. E265 and E277 together coordinate Mg(2+). Residues D284, K354, and R361–R362 contribute to the N(1)-(5-phospho-beta-D-ribosyl)glycinamide site.

Belongs to the PurK/PurT family. As to quaternary structure, homodimer.

The catalysed reaction is N(1)-(5-phospho-beta-D-ribosyl)glycinamide + formate + ATP = N(2)-formyl-N(1)-(5-phospho-beta-D-ribosyl)glycinamide + ADP + phosphate + H(+). The protein operates within purine metabolism; IMP biosynthesis via de novo pathway; N(2)-formyl-N(1)-(5-phospho-D-ribosyl)glycinamide from N(1)-(5-phospho-D-ribosyl)glycinamide (formate route): step 1/1. In terms of biological role, involved in the de novo purine biosynthesis. Catalyzes the transfer of formate to 5-phospho-ribosyl-glycinamide (GAR), producing 5-phospho-ribosyl-N-formylglycinamide (FGAR). Formate is provided by PurU via hydrolysis of 10-formyl-tetrahydrofolate. This chain is Formate-dependent phosphoribosylglycinamide formyltransferase, found in Shewanella amazonensis (strain ATCC BAA-1098 / SB2B).